The following is a 127-amino-acid chain: Aspartate 1-decarboxylase (127 aa).

The Schiff-base intermediate with substrate; via pyruvic acid role is filled by Ser-25. Pyruvic acid (Ser) is present on Ser-25. A substrate-binding site is contributed by Thr-57. Tyr-58 (proton donor) is an active-site residue. Residue Gly-73–Ala-75 coordinates substrate.

It belongs to the PanD family. Heterooctamer of four alpha and four beta subunits. Requires pyruvate as cofactor. In terms of processing, is synthesized initially as an inactive proenzyme, which is activated by self-cleavage at a specific serine bond to produce a beta-subunit with a hydroxyl group at its C-terminus and an alpha-subunit with a pyruvoyl group at its N-terminus.

The protein resides in the cytoplasm. It carries out the reaction L-aspartate + H(+) = beta-alanine + CO2. Its pathway is cofactor biosynthesis; (R)-pantothenate biosynthesis; beta-alanine from L-aspartate: step 1/1. Catalyzes the pyruvoyl-dependent decarboxylation of aspartate to produce beta-alanine. This is Aspartate 1-decarboxylase from Neisseria meningitidis serogroup C / serotype 2a (strain ATCC 700532 / DSM 15464 / FAM18).